Consider the following 423-residue polypeptide: uncharacterized protein (423 aa).

The protein belongs to the asfivirus E423R family.

Its subcellular location is the virion. This is an uncharacterized protein from Ornithodoros (relapsing fever ticks).